The sequence spans 844 residues: Receptor-like protein 49 (844 aa).

The first 31 residues, M1–A31, serve as a signal peptide directing secretion. The Extracellular segment spans residues K32–Q803. 4 N-linked (GlcNAc...) asparagine glycosylation sites follow: N59, N95, N112, and N159. LRR repeat units follow at residues Q102–G126, L136–L160, S161–N183, N185–L208, S209–N231, L242–S265, L266–I290, S292–S313, S315–P339, Y345–P362, S363–Q385, T386–L409, P410–G434, G436–V457, D458–L481, D482–N504, H506–S527, D528–C551, A553–L574, L575–F601, P602–P625, F665–L689, K690–L713, S714–L737, and F739–T762. N-linked (GlcNAc...) asparagine glycosylation occurs at N207. N262 carries N-linked (GlcNAc...) asparagine glycosylation. N-linked (GlcNAc...) asparagine glycosylation is present at N310. Residues N374 and N384 are each glycosylated (N-linked (GlcNAc...) asparagine). N416 carries N-linked (GlcNAc...) asparagine glycosylation. 3 N-linked (GlcNAc...) asparagine glycosylation sites follow: N493, N516, and N550. N-linked (GlcNAc...) asparagine glycans are attached at residues N696 and N712. A glycan (N-linked (GlcNAc...) asparagine) is linked at N744. Residues V804–I824 traverse the membrane as a helical segment. Topologically, residues G825–T844 are cytoplasmic.

This sequence belongs to the RLP family.

It localises to the cell membrane. This is Receptor-like protein 49 from Arabidopsis thaliana (Mouse-ear cress).